The following is a 504-amino-acid chain: Endochitinase (504 aa).

The signal sequence occupies residues 1–22; the sequence is MNRTTLILFFIILSNTITVIHG. The GH18 domain maps to 23-392; sequence YVRGCYYTNW…NAISSELEGE (370 aa). Cysteine 27 and cysteine 52 form a disulfide bridge. Chitin-binding positions include 78-79 and 105-108; these read TE and GGYN. The active-site Proton donor is the glutamate 148. Chitin-binding positions include tyrosine 149, 212–215, and tryptophan 362; that span reads MSYD. A disordered region spans residues 389–450; it reads LEGESENPEI…YDTDETEGQE (62 aa). Low complexity predominate over residues 396–408; that stretch reads PEITTEEPSITET. A run of 2 repeats spans residues 407–420 and 421–434. The segment at 407–448 is 3 X 14 AA approximate tandem repeats of E-T-E-A-Y-[ED]-T-D-E-T-E-E-T-S; sequence ETEAYETDETEETSETEAYDTDETEETSETEATTYDTDETEG. Over residues 409–435 the composition is skewed to acidic residues; the sequence is EAYETDETEETSETEAYDTDETEETSE. The stretch at 435 to 448 is one 3; approximate repeat; the sequence is ETEATTYDTDETEG. Residues 448 to 504 enclose the Chitin-binding type-2 domain; that stretch reads GQECPERDGLFPHPTDCHLFIQCANNIAYVMQCPATTFFNDAIKVCDHMTNAPDTCI. A disulfide bridge links cysteine 480 with cysteine 493.

The protein belongs to the glycosyl hydrolase 18 family. Chitinase class II subfamily. Post-translationally, O-glycosylated.

It catalyses the reaction Random endo-hydrolysis of N-acetyl-beta-D-glucosaminide (1-&gt;4)-beta-linkages in chitin and chitodextrins.. Its function is as follows. Microfilarial chitinase, which may function to degrade chitin-containing structures in the micro-filaria or in its mosquito vector during parasite development and transmission. The protein is Endochitinase of Brugia malayi (Filarial nematode worm).